Reading from the N-terminus, the 154-residue chain is Protein X (154 aa).

Positions 68–117 (PCALRFTSARRMETTVNAHQILPKVLHKRTLGLSAMSTTDLEAYFKDCLF) are mitochondrial targeting sequence.

This sequence belongs to the orthohepadnavirus protein X family. In terms of assembly, may form homodimer. May interact with host CEBPA, CFLAR, CREB1, DDB1, E4F1, HBXIP, HSPD1/HSP60, NFKBIA, POLR2E and SMAD4. Interacts with host SMC5-SMC6 complex and induces its degradation. Interacts with host TRPC4AP; leading to prevent ubiquitination of TRPC4AP. Interacts with host PLSCR1; this interaction promotes ubiquitination and degradation of HBx and impairs HBx-mediated cell proliferation. In terms of processing, a fraction may be phosphorylated in insect cells and HepG2 cells, a human hepatoblastoma cell line. Phosphorylated in vitro by host protein kinase C or mitogen-activated protein kinase. N-acetylated in insect cells.

It localises to the host cytoplasm. The protein resides in the host nucleus. Its subcellular location is the host mitochondrion. In terms of biological role, multifunctional protein that plays a role in silencing host antiviral defenses and promoting viral transcription. Does not seem to be essential for HBV infection. May be directly involved in development of cirrhosis and liver cancer (hepatocellular carcinoma). Most of cytosolic activities involve modulation of cytosolic calcium. The effect on apoptosis is controversial depending on the cell types in which the studies have been conducted. May induce apoptosis by localizing in mitochondria and causing loss of mitochondrial membrane potential. May also modulate apoptosis by binding host CFLAR, a key regulator of the death-inducing signaling complex (DISC). Promotes viral transcription by using the host E3 ubiquitin ligase DDB1 to target the SMC5-SMC6 complex to proteasomal degradation. This host complex would otherwise bind to viral episomal DNA, and prevents its transcription. Moderately stimulates transcription of many different viral and cellular transcription elements. Promoters and enhancers stimulated by HBx contain DNA binding sites for NF-kappa-B, AP-1, AP-2, c-EBP, ATF/CREB, or the calcium-activated factor NF-AT. The polypeptide is Protein X (Hepatitis B virus genotype E subtype ayw4 (isolate Kou) (HBV-E)).